Consider the following 92-residue polypeptide: MAPLHHILVLCVGFLTTATAEAPQEHDPFTYDYQSLRIGGLIIAGILFILGILIVLSRRCRCKFNQQQRTGEPDEEEGTFRSSIRRLSTRRR.

Residues 1-20 form the signal peptide; sequence MAPLHHILVLCVGFLTTATA. Residues 21–35 are Extracellular-facing; that stretch reads EAPQEHDPFTYDYQS. Residues 36–56 form a helical membrane-spanning segment; that stretch reads LRIGGLIIAGILFILGILIVL. The Cytoplasmic portion of the chain corresponds to 57 to 92; the sequence is SRRCRCKFNQQQRTGEPDEEEGTFRSSIRRLSTRRR. Residue cysteine 60 is the site of S-palmitoyl cysteine attachment. Cysteine 62 is modified (S-glutathionyl cysteine; alternate). Cysteine 62 carries S-palmitoyl cysteine; alternate lipidation. The segment at 65–92 is disordered; it reads NQQQRTGEPDEEEGTFRSSIRRLSTRRR. Threonine 79 bears the Phosphothreonine mark. Serine 82 is modified (phosphoserine). Residues serine 83 and serine 88 each carry the phosphoserine; by PKA and PKC modification. Positions 83–92 are enriched in basic residues; the sequence is SIRRLSTRRR. A Phosphothreonine; by PKC modification is found at threonine 89.

This sequence belongs to the FXYD family. As to quaternary structure, homotetramer. Monomer. Regulatory subunit of the sodium/potassium-transporting ATPase (NKA) which is composed of a catalytic alpha subunit, a non-catalytic beta subunit and an additional regulatory subunit. The monomeric form associates with NKA while the oligomeric form does not. Interacts with the catalytic alpha-1 subunit ATP1A1. Also interacts with the catalytic alpha-2 and alpha-3 subunits ATP1A2 and ATP1A3. Very little interaction with the alpha subunits ATP1A1, ATP1A2 or ATP1A3 when phosphorylated at Ser-83. Interacts with non-catalytic beta-1 subunit ATP1B1. Oxidative stress decreases interaction with ATP1A1 but increases interaction with ATP1B1. Major plasma membrane substrate for cAMP-dependent protein kinase (PKA) and protein kinase C (PKC) in several different tissues. Phosphorylated in response to insulin and adrenergic stimulation. Phosphorylation at Ser-88 stimulates sodium/potassium-transporting ATPase activity while the unphosphorylated form inhibits sodium/potassium-transporting ATPase activity. Phosphorylation increases tetramerization, decreases binding to ATP1A1 and reduces inhibition of ATP1A1 activity. Phosphorylation at Ser-83 leads to greatly reduced interaction with ATP1A1, ATP1A2 and ATP1A3. May be phosphorylated by DMPK. In terms of processing, palmitoylation increases half-life and stability and is enhanced upon phosphorylation at Ser-88 by PKA. Present in heart, esophagus, stomach, aorta, skeletal muscle, smooth muscle, and liver but absent from brain and kidney.

The protein resides in the cell membrane. It is found in the sarcolemma. The protein localises to the apical cell membrane. It localises to the membrane. Its subcellular location is the caveola. The protein resides in the T-tubule. Associates with and regulates the activity of the sodium/potassium-transporting ATPase (NKA) which transports Na(+) out of the cell and K(+) into the cell. Inhibits NKA activity in its unphosphorylated state and stimulates activity when phosphorylated. Reduces glutathionylation of the NKA beta-1 subunit ATP1B1, thus reversing glutathionylation-mediated inhibition of ATP1B1. Contributes to female sexual development by maintaining the excitability of neurons which secrete gonadotropin-releasing hormone. The polypeptide is Phospholemman (Canis lupus familiaris (Dog)).